Here is a 147-residue protein sequence, read N- to C-terminus: Thyrotropin subunit beta (147 aa).

A signal peptide spans 1–20; it reads MELSVAMYGLLCLLFSQAVP. Cystine bridges form between cysteine 22–cysteine 72, cysteine 36–cysteine 87, cysteine 39–cysteine 127, cysteine 47–cysteine 103, cysteine 51–cysteine 105, and cysteine 108–cysteine 115. N-linked (GlcNAc...) asparagine glycosylation is present at asparagine 43.

Belongs to the glycoprotein hormones subunit beta family. Heterodimer of a common alpha chain and a unique beta chain which confers biological specificity to thyrotropin, lutropin, follitropin and gonadotropin. In terms of tissue distribution, pituitary gland. Higher levels seen in immature fishes than the mature fishes.

The protein localises to the secreted. Functionally, indispensable for the control of thyroid structure and metabolism. May play some role in the biological processes of the immature fishes. This chain is Thyrotropin subunit beta (tshb), found in Oncorhynchus mykiss (Rainbow trout).